The sequence spans 106 residues: Chaperone modulatory protein CbpM (106 aa).

Belongs to the CbpM family.

Interacts with CbpA and inhibits both the DnaJ-like co-chaperone activity and the DNA binding activity of CbpA. Together with CbpA, modulates the activity of the DnaK chaperone system. Does not inhibit the co-chaperone activity of DnaJ. This Coxiella burnetii (strain CbuK_Q154) (Coxiella burnetii (strain Q154)) protein is Chaperone modulatory protein CbpM.